The primary structure comprises 90 residues: Acylphosphatase (90 aa).

Residues 5–90 enclose the Acylphosphatase-like domain; it reads SFVVHVWGQV…PPQKGGFHTN (86 aa). Active-site residues include Arg20 and Asn38.

This sequence belongs to the acylphosphatase family.

It carries out the reaction an acyl phosphate + H2O = a carboxylate + phosphate + H(+). The chain is Acylphosphatase (acyP) from Aeromonas salmonicida (strain A449).